Consider the following 181-residue polypeptide: Nucleoside triphosphate/diphosphate phosphatase (181 aa).

Arg26 serves as the catalytic Proton donor. Residues Asn90, Asp106, Asp108, Asp110, Asp123, and Glu126 each coordinate Mg(2+).

The protein belongs to the Ntdp family. Requires Mg(2+) as cofactor.

It carries out the reaction a ribonucleoside 5'-triphosphate + H2O = a ribonucleoside 5'-diphosphate + phosphate + H(+). The enzyme catalyses a ribonucleoside 5'-diphosphate + H2O = a ribonucleoside 5'-phosphate + phosphate + H(+). In terms of biological role, has nucleoside phosphatase activity towards nucleoside triphosphates and nucleoside diphosphates. The sequence is that of Nucleoside triphosphate/diphosphate phosphatase from Staphylococcus carnosus (strain TM300).